The primary structure comprises 504 residues: NADH-quinone oxidoreductase subunit N (504 aa).

Helical transmembrane passes span 9-29 (IALL…LSII), 38-58 (AVLT…HMMW), 78-98 (VLYV…GYVW), 114-134 (LLIA…IVLF), 135-155 (LGIE…VFSK), 164-184 (YIIL…FIYC), 216-236 (IVIG…CVPF), 254-274 (YLAT…LLIL), 282-302 (LHIF…LMAI), 309-329 (RMLA…LIAL), 341-361 (ISVY…IVNI), 392-412 (VIFV…GFIG), 425-447 (LWFL…LKII), and 476-496 (FMVI…QFIV).

The protein belongs to the complex I subunit 2 family. In terms of assembly, NDH-1 is composed of 13 different subunits. Subunits NuoA, H, J, K, L, M, N constitute the membrane sector of the complex.

The protein resides in the cell inner membrane. It catalyses the reaction a quinone + NADH + 5 H(+)(in) = a quinol + NAD(+) + 4 H(+)(out). In terms of biological role, NDH-1 shuttles electrons from NADH, via FMN and iron-sulfur (Fe-S) centers, to quinones in the respiratory chain. The immediate electron acceptor for the enzyme in this species is believed to be ubiquinone. Couples the redox reaction to proton translocation (for every two electrons transferred, four hydrogen ions are translocated across the cytoplasmic membrane), and thus conserves the redox energy in a proton gradient. The sequence is that of NADH-quinone oxidoreductase subunit N from Blochmanniella floridana.